The chain runs to 1183 residues: MTSSGKIRIYELSKDLSLDNKDVLDAARKLAIAAKSHSSSISTLEANQIKDFLKKSKTINSTSKSSNKLDKQILSVKKNPVKTQKDQKTEPKKKNHDQTELSQAKLNTLLKPSQTLIKNQDSSQANNQKALKNKFPAQQQITAPSKPNKPLPPNPRVEVKPTISKPLTQAESTIPQSEQKKDGQFINQPKRSELAKKPTGQPQQINPQEPKRPLAPPSRPKIDIQDKKPLQPNNQKAKTRINQGEISPQKVGQGNIQKIKSQNKQNQPSRTPQPPTKGNTLELVGAPIRREKPVNKPHTNEVRNKPVMPSRPGAPKPPAAANRQGLSNRPGSNNKIGGTGRPGSQNRQGPNRGGVANRTTQGQNRPGGNNRAGAPVRSGSPNRGGIQNRPGVPTRSLGGPNRSNNRPGVPSGMRKPVAPSELMQLQKPQARPNAPQRKTDSPTSPRPKRENSTGARPPVNRPTPAAPKKPAHRPGGTAAAPRRTGRPDWDDSAKLDALRNKSPQKQRQKVHIIGENDDALTAERGGFAGEQQAVVLSASLARPSKPKVGKRNNGKPLTALKKRKKETTRQRQRRRAMELRAAREAKLVRPEMIVVPEDNLTVQELADMLSVESSEIIKSLFFKGITATVTQSLDLATIETVAEEFGVPVLQDDVEEAAKKTVEMIEEGDLKYLIRRPPVVTVMGHVDHGKTSLLDAIRKSRVAAGEAGGITQHIGAYQIETEHDGSTKKLTFLDTPGHEAFTAMRARGTRVTDVAILVVAADDGVRPQTLEAISHARAAKVPIVVAINKIDKEGSSPDRVKQELSEQDLLSEEWGGDVVMVPVSAIKSENIDKLLEMVLLVTEVEDLQANPDRLAKGTVIEAHLDKAKGPVATLLVQNGTLKSGDVVAAGPVLGKVRAMVDENGSRIKEAGPSCPVEALGFSEVPTAGDEFEVYPDEKAARAVVGERATDARAARLAQQMASRRVSLSSMSGQASEGELKELNIILKADAQGSLEAILGSLEQLPKDEVQVRVLLSAPGEITETDIDLAAASGAVIVGFNTSMASGAKRAADANGVDVRDYEVIYKLLEDIQLAMEGLLEPEMIEEALGVAEVRAIFSIGKSAVAGCYVTNGKIQRNCRARVKRGKQIVFEGDLDSLKRNKDDVKDVSTGFECGIGCDRFANWEEGDQIEAFKLVTQRRKLTN.

Disordered stretches follow at residues 55–512 and 538–574; these read KSKT…KVHI and ASLARPSKPKVGKRNNGKPLTALKKRKKETTRQRQRR. Basic and acidic residues predominate over residues 83–99; it reads TQKDQKTEPKKKNHDQT. 2 stretches are compositionally biased toward polar residues: residues 100-143 and 165-177; these read ELSQ…QITA and KPLTQAESTIPQS. The segment covering 220–229 has biased composition (basic and acidic residues); it reads PKIDIQDKKP. The segment covering 231–252 has biased composition (polar residues); sequence QPNNQKAKTRINQGEISPQKVG. Positions 253 to 267 are enriched in low complexity; that stretch reads QGNIQKIKSQNKQNQ. The span at 288 to 304 shows a compositional bias: basic and acidic residues; that stretch reads IRREKPVNKPHTNEVRN. 2 stretches are compositionally biased toward polar residues: residues 324–349 and 357–367; these read QGLSNRPGSNNKIGGTGRPGSQNRQG and NRTTQGQNRPG. A compositionally biased stretch (basic and acidic residues) spans 485–499; sequence GRPDWDDSAKLDALR. Composition is skewed to basic residues over residues 544–553 and 560–574; these read SKPKVGKRNN and LKKRKKETTRQRQRR. Residues 675 to 847 enclose the tr-type G domain; it reads RRPPVVTVMG…VLLVTEVEDL (173 aa). A G1 region spans residues 684–691; the sequence is GHVDHGKT. Residue 684 to 691 coordinates GTP; the sequence is GHVDHGKT. Residues 709–713 form a G2 region; it reads GITQH. The G3 stretch occupies residues 734–737; it reads DTPG. Residues 734-738 and 788-791 each bind GTP; these read DTPGH and NKID. The interval 788–791 is G4; the sequence is NKID. The G5 stretch occupies residues 824-826; that stretch reads SAI.

This sequence belongs to the TRAFAC class translation factor GTPase superfamily. Classic translation factor GTPase family. IF-2 subfamily.

The protein localises to the cytoplasm. One of the essential components for the initiation of protein synthesis. Protects formylmethionyl-tRNA from spontaneous hydrolysis and promotes its binding to the 30S ribosomal subunits. Also involved in the hydrolysis of GTP during the formation of the 70S ribosomal complex. The polypeptide is Translation initiation factor IF-2 (Prochlorococcus marinus (strain NATL1A)).